The chain runs to 87 residues: Phosphoribosyl-ATP pyrophosphatase (87 aa).

Belongs to the PRA-PH family.

The protein localises to the cytoplasm. It catalyses the reaction 1-(5-phospho-beta-D-ribosyl)-ATP + H2O = 1-(5-phospho-beta-D-ribosyl)-5'-AMP + diphosphate + H(+). It participates in amino-acid biosynthesis; L-histidine biosynthesis; L-histidine from 5-phospho-alpha-D-ribose 1-diphosphate: step 2/9. The polypeptide is Phosphoribosyl-ATP pyrophosphatase (Leifsonia xyli subsp. xyli (strain CTCB07)).